The following is a 625-amino-acid chain: TRAF3-interacting protein 1 (625 aa).

Positions 1 to 322 (MNAAVVRRTQ…RKLSDGSFKD (322 aa)) are abolishes microtubules binding when missing. The interval 130-439 (AGDKGDSRGR…DSQNSDNEDD (310 aa)) is disordered. Residues 141–152 (QRTSKAQEPNNK) are compositionally biased toward polar residues. The span at 153–327 (SGKEEESRIH…GSFKDVKAEM (175 aa)) shows a compositional bias: basic and acidic residues. The DISC1-interaction domain stretch occupies residues 229–625 (RAKDRDRNNR…VHSINLSSRR (397 aa)). Phosphoserine occurs at positions 316 and 409. Over residues 420–434 (SGKTVSSVIIDSQNS) the composition is skewed to polar residues. A coiled-coil region spans residues 472–600 (GLVKKILETK…IRDQQDKICA (129 aa)).

This sequence belongs to the TRAF3IP1 family. Interacts with IL13RA1. Binds to microtubules, TRAF3 and DISC1. Component of the IFT complex B, at least composed of IFT20, IFT22, IFT25, IFT27, IFT46, IFT52, TRAF3IP1/IFT54, IFT57, IFT74, IFT80, IFT81, and IFT88. Interacts with IFT88. Interacts with MAP4.

It is found in the cytoplasm. The protein resides in the cytoskeleton. The protein localises to the cell projection. It localises to the cilium. Its subcellular location is the cilium axoneme. It is found in the cilium basal body. Its function is as follows. Plays an inhibitory role on IL13 signaling by binding to IL13RA1. Involved in suppression of IL13-induced STAT6 phosphorylation, transcriptional activity and DNA-binding. Recruits TRAF3 and DISC1 to the microtubules. Involved in epithelial morphogenesis and in the regulation of microtubule cytoskeleton organization. Is a negative regulator of microtubule stability, acting through the control of MAP4 levels. Involved in ciliogenesis. In Mus musculus (Mouse), this protein is TRAF3-interacting protein 1 (Traf3ip1).